Consider the following 246-residue polypeptide: Ly6/PLAUR domain-containing protein 4 (246 aa).

The N-terminal stretch at 1-26 is a signal peptide; the sequence is MGPQHLSPMQLLCLLGAISSLPWAEA. N-linked (GlcNAc...) asparagine glycosylation occurs at Asn-117. In terms of domain architecture, UPAR/Ly6 spans 142-223; sequence CPTCVGEHSK…INIVEKALFT (82 aa). Ala-225 carries GPI-anchor amidated alanine lipidation. Residues 226-246 constitute a propeptide, removed in mature form; it reads GTPCRSPSWGILLGLLFAFKG.

Its subcellular location is the cell membrane. In Bos taurus (Bovine), this protein is Ly6/PLAUR domain-containing protein 4 (LYPD4).